Here is a 506-residue protein sequence, read N- to C-terminus: uncharacterized protein (506 aa).

The protein belongs to the Mg-chelatase subunits D/I family. ComM subfamily.

This is an uncharacterized protein from Salmonella typhimurium (strain LT2 / SGSC1412 / ATCC 700720).